A 461-amino-acid polypeptide reads, in one-letter code: uncharacterized protein (461 aa).

The tract at residues 86–127 (KMKPNKDDDEEEDEDDEDDEDDEEEDNEEEDNEEENEITIAP) is disordered. Over residues 92-122 (DDDEEEDEDDEDDEDDEEEDNEEEDNEEENE) the composition is skewed to acidic residues. 2 coiled-coil regions span residues 95 to 123 (EEEDEDDEDDEDDEEEDNEEEDNEEENEI) and 405 to 459 (NKYI…KLKK).

Belongs to the mimivirus L5 family.

This is an uncharacterized protein from Acanthamoeba polyphaga mimivirus (APMV).